Consider the following 1405-residue polypeptide: DNA-directed RNA polymerase subunit beta' (1405 aa).

C70, C72, C85, and C88 together coordinate Zn(2+). 3 residues coordinate Mg(2+): D460, D462, and D464. C815, C890, C897, and C900 together coordinate Zn(2+).

It belongs to the RNA polymerase beta' chain family. The RNAP catalytic core consists of 2 alpha, 1 beta, 1 beta' and 1 omega subunit. When a sigma factor is associated with the core the holoenzyme is formed, which can initiate transcription. Mg(2+) is required as a cofactor. It depends on Zn(2+) as a cofactor.

It catalyses the reaction RNA(n) + a ribonucleoside 5'-triphosphate = RNA(n+1) + diphosphate. DNA-dependent RNA polymerase catalyzes the transcription of DNA into RNA using the four ribonucleoside triphosphates as substrates. The protein is DNA-directed RNA polymerase subunit beta' of Xanthomonas campestris pv. campestris (strain B100).